Consider the following 246-residue polypeptide: Endonuclease V (246 aa).

Mg(2+)-binding residues include D50 and D120.

This sequence belongs to the endonuclease V family. Mg(2+) is required as a cofactor.

Its subcellular location is the cytoplasm. The catalysed reaction is Endonucleolytic cleavage at apurinic or apyrimidinic sites to products with a 5'-phosphate.. DNA repair enzyme involved in the repair of deaminated bases. Selectively cleaves double-stranded DNA at the second phosphodiester bond 3' to a deoxyinosine leaving behind the intact lesion on the nicked DNA. In Gloeobacter violaceus (strain ATCC 29082 / PCC 7421), this protein is Endonuclease V.